A 327-amino-acid polypeptide reads, in one-letter code: uncharacterized protein (327 aa).

The Cytoplasmic portion of the chain corresponds to 1–19 (MSIAQDRGIVFKLLSIYRA). A helical membrane pass occupies residues 20 to 40 (AAGIFMALAQLIVIFFGYCDF). The Extracellular segment spans residues 41–51 (KIKGYRIASYN). Residues 52 to 72 (APTFASSFIILAVCLLLVVVL) traverse the membrane as a helical segment. At 73-104 (ENPEVKVTNSENSLFSALKQFFRVERKKLISC) the chain is on the cytoplasmic side. A helical membrane pass occupies residues 105–125 (LILLWSMFLSSFIMSEVVYFM). Topologically, residues 126–141 (PLFLTLHVNWDTKFQG) are extracellular. A helical transmembrane segment spans residues 142 to 162 (IAFMVASILGVTGSYFAPKLI). At 163 to 199 (NVGCSCGRAKDGGLEESDTTGSETVEVKKKDSLYSGQ) the chain is on the cytoplasmic side. The chain crosses the membrane as a helical span at residues 200 to 220 (VFLSIFALFVSLLGQAFMIGA). Residues 221–235 (SEALKHKSMPPTNSG) lie on the Extracellular side of the membrane. Residues 236–256 (IFFSAGMSITLLGYNFLASSI) form a helical membrane-spanning segment. Topologically, residues 257–275 (PALFSMYIDPKLKVQLMPS) are cytoplasmic. The helical transmembrane segment at 276–296 (IGAISGIGKLVAPIVLAALYG) threads the bilayer. The Extracellular segment spans residues 297-300 (TRLG). Residues 301 to 321 (LSIAVGFGMILVAVSIPPLIW) form a helical membrane-spanning segment. Residues 322-327 (LRKKRC) lie on the Cytoplasmic side of the membrane.

It is found in the membrane. This is an uncharacterized protein from Saccharomyces cerevisiae (strain ATCC 204508 / S288c) (Baker's yeast).